The sequence spans 512 residues: D-alanine--D-alanyl carrier protein ligase (512 aa).

Position 152-153 (T152–S153) interacts with ATP. Residue D199 participates in D-alanine binding. N294–T299 provides a ligand contact to ATP. A D-alanine-binding site is contributed by V303. Residues D385, Y397–R400, and K499 each bind ATP. D-alanine is bound at residue K499.

Belongs to the ATP-dependent AMP-binding enzyme family. DltA subfamily.

Its subcellular location is the cytoplasm. The catalysed reaction is holo-[D-alanyl-carrier protein] + D-alanine + ATP = D-alanyl-[D-alanyl-carrier protein] + AMP + diphosphate. The protein operates within cell wall biogenesis; lipoteichoic acid biosynthesis. Its function is as follows. Catalyzes the first step in the D-alanylation of lipoteichoic acid (LTA), the activation of D-alanine and its transfer onto the D-alanyl carrier protein (Dcp) DltC. In an ATP-dependent two-step reaction, forms a high energy D-alanyl-AMP intermediate, followed by transfer of the D-alanyl residue as a thiol ester to the phosphopantheinyl prosthetic group of the Dcp. D-alanylation of LTA plays an important role in modulating the properties of the cell wall in Gram-positive bacteria, influencing the net charge of the cell wall. In Streptococcus pyogenes serotype M3 (strain SSI-1), this protein is D-alanine--D-alanyl carrier protein ligase.